The chain runs to 767 residues: Transient receptor potential cation channel subfamily V member 6 (767 aa).

The disordered stretch occupies residues 1-33; it reads MGPLQREGRPALGDANVAPGSSPGGVWHQPQPP. At 1-366 the chain is on the cytoplasmic side; sequence MGPLQREGRP…SLKWKRYGRP (366 aa). 3 ANK repeats span residues 84–114, 118–147, and 156–185; these read IWES…EVHQ, MGET…ELVF, and EGQT…SVSA. The tract at residues 133–143 is interaction with calmodulin; it reads EAAMVLMEAAP. A phosphotyrosine; by SRC mark is found at tyrosine 201 and tyrosine 202. 3 ANK repeats span residues 202 to 231, 235 to 276, and 278 to 307; these read YGEH…DIRA, LGNT…LVPN, and QGLT…HIQW. A helical transmembrane segment spans residues 367-387; the sequence is YFCVLGAIYVLYIICFTMCCV. Residues 388–424 are Extracellular-facing; sequence YRPLKPRITNRTNPRDNTLLQQKLLQEAYVTPKDDLR. N-linked (GlcNAc...) asparagine glycosylation occurs at asparagine 397. The chain crosses the membrane as a helical span at residues 425 to 447; it reads LVGELVSIVGAVIILLVEIPDIF. At 448–462 the chain is on the cytoplasmic side; sequence RLGVTRFFGQTILGG. Residues 463 to 482 form a helical membrane-spanning segment; the sequence is PFHVIIVTYAFMVLVTMVMR. Topologically, residues 483 to 488 are extracellular; the sequence is LTNSDG. A helical membrane pass occupies residues 489 to 508; that stretch reads EVVPMSFALVLGWCNVMYFA. The Cytoplasmic portion of the chain corresponds to 509-528; that stretch reads RGFQMLGPFTIMIQKMIFGD. A helical transmembrane segment spans residues 529–551; that stretch reads LMRFCWLMAVVILGFASAFYIIF. The Extracellular portion of the chain corresponds to 552 to 564; the sequence is QTEDPDELGHFYD. The pore-forming intramembrane region spans 565-584; it reads YPMALFSTFELFLTIIDGPA. The short motif at 580–584 is the Selectivity filter element; it reads IDGPA. Aspartate 581 is a Ca(2+) binding site. The Extracellular segment spans residues 585 to 595; it reads NYDVDLPFMYS. A helical membrane pass occupies residues 596-616; it reads ITYAAFAIIATLLMLNLLIAM. Over 617–767 the chain is Cytoplasmic; the sequence is MGDTHWRVAH…EDGEGWEYQI (151 aa). The segment at 637–641 is interaction with S100A10; that stretch reads VATTV. The segment at 689–707 is interaction with calmodulin; sequence AFQQQDDLYSEDLEKDSGE.

The protein belongs to the transient receptor (TC 1.A.4) family. TrpV subfamily. TRPV6 sub-subfamily. Homotetramer. Probably also forms heterotetramers with TRPV5. Interacts with TRPV5. Interacts with S100A10 and probably with the ANAX2-S100A10 heterotetramer. The interaction with S100A10 is required for the trafficking to the plasma membrane. Interacts with calmodulin. Interacts with BSPRY. Interacts with TCAF1 and TCAF2. Post-translationally, glycosylated. Phosphorylation at Tyr-201 and Tyr-202 by SRC leads to an increased calcium influx through the channel. Probably dephosphorylated at these sites by PTPN1. In terms of tissue distribution, expressed in duodenum, proximal jejunum, cecum, and colon.

Its subcellular location is the cell membrane. It catalyses the reaction Ca(2+)(in) = Ca(2+)(out). Its function is as follows. Calcium selective cation channel that mediates Ca(2+) uptake in various tissues, including the intestine. Important for normal Ca(2+) ion homeostasis in the body, including bone and skin. The channel is activated by low internal calcium level, probably including intracellular calcium store depletion, and the current exhibits an inward rectification. Inactivation includes both a rapid Ca(2+)-dependent and a slower Ca(2+)-calmodulin-dependent mechanism; the latter may be regulated by phosphorylation. In vitro, is slowly inhibited by Mg(2+) in a voltage-independent manner. Heteromeric assembly with TRPV5 seems to modify channel properties. TRPV5-TRPV6 heteromultimeric concatemers exhibit voltage-dependent gating. This is Transient receptor potential cation channel subfamily V member 6 (Trpv6) from Rattus norvegicus (Rat).